We begin with the raw amino-acid sequence, 63 residues long: Large ribosomal subunit protein uL29 (63 aa).

Belongs to the universal ribosomal protein uL29 family.

In Shewanella baltica (strain OS223), this protein is Large ribosomal subunit protein uL29.